A 207-amino-acid polypeptide reads, in one-letter code: Protein FAM177A1 (207 aa).

Met-1 carries the N-acetylmethionine modification. The residue at position 65 (Ser-65) is a Phosphoserine. Thr-66 is modified (phosphothreonine). A coiled-coil region spans residues 131–170 (IDEYYRMKKEEEEEEEENRMSEEAERQYQQNKLQADSIVQ). Positions 142–176 (EEEEEENRMSEEAERQYQQNKLQADSIVQTDQPET) are disordered. The span at 157–176 (QYQQNKLQADSIVQTDQPET) shows a compositional bias: polar residues.

Belongs to the FAM177 family.

This is Protein FAM177A1 (Fam177a1) from Mus musculus (Mouse).